The primary structure comprises 73 residues: Large ribosomal subunit protein bL31 (73 aa).

Positions 16, 18, 37, and 40 each coordinate Zn(2+).

It belongs to the bacterial ribosomal protein bL31 family. Type A subfamily. Part of the 50S ribosomal subunit. Requires Zn(2+) as cofactor.

Functionally, binds the 23S rRNA. The polypeptide is Large ribosomal subunit protein bL31 (Hamiltonella defensa subsp. Acyrthosiphon pisum (strain 5AT)).